The sequence spans 494 residues: 4-hydroxyphenylacetate 3-monooxygenase oxygenase component (494 aa).

Residues 103-107 (RSPDY) and H149 contribute to the substrate site. FAD contacts are provided by residues 149–151 (HTL), 155–158 (QMNR), and T192. Position 205–206 (205–206 (ST)) interacts with substrate. 455–458 (DPVR) contributes to the FAD binding site.

The protein belongs to the FADH(2)-utilizing monooxygenase family. As to quaternary structure, 4-HPA 3-monooxygenase consists of a reductase component HpaI and an oxygenase component HpaH.

The enzyme catalyses 4-hydroxyphenylacetate + FADH2 + O2 = 3,4-dihydroxyphenylacetate + FAD + H2O + H(+). It participates in aromatic compound metabolism; 4-hydroxyphenylacetate degradation; pyruvate and succinate semialdehyde from 4-hydroxyphenylacetate: step 1/7. Functionally, utilizes FADH(2) supplied by HpaI, to catalyze the hydroxylation of 4-hydroxyphenylacetic acid, leading to the production of 3,4-dihydroxyphenylacetic acid (DHPA). In Geobacillus sp. (strain PA-9), this protein is 4-hydroxyphenylacetate 3-monooxygenase oxygenase component (hpaH).